A 249-amino-acid polypeptide reads, in one-letter code: Probable transcriptional regulatory protein OTBS_0251 (249 aa).

The protein belongs to the TACO1 family.

The protein resides in the cytoplasm. This Orientia tsutsugamushi (strain Boryong) (Rickettsia tsutsugamushi) protein is Probable transcriptional regulatory protein OTBS_0251.